Reading from the N-terminus, the 571-residue chain is Proline--tRNA ligase (571 aa).

This sequence belongs to the class-II aminoacyl-tRNA synthetase family. ProS type 1 subfamily. Homodimer.

The protein localises to the cytoplasm. The catalysed reaction is tRNA(Pro) + L-proline + ATP = L-prolyl-tRNA(Pro) + AMP + diphosphate. Its function is as follows. Catalyzes the attachment of proline to tRNA(Pro) in a two-step reaction: proline is first activated by ATP to form Pro-AMP and then transferred to the acceptor end of tRNA(Pro). As ProRS can inadvertently accommodate and process non-cognate amino acids such as alanine and cysteine, to avoid such errors it has two additional distinct editing activities against alanine. One activity is designated as 'pretransfer' editing and involves the tRNA(Pro)-independent hydrolysis of activated Ala-AMP. The other activity is designated 'posttransfer' editing and involves deacylation of mischarged Ala-tRNA(Pro). The misacylated Cys-tRNA(Pro) is not edited by ProRS. The protein is Proline--tRNA ligase of Thermodesulfovibrio yellowstonii (strain ATCC 51303 / DSM 11347 / YP87).